The following is a 320-amino-acid chain: o-succinylbenzoate synthase (320 aa).

The Proton donor role is filled by Lys-133. Residues Asp-161, Glu-190, and Asp-213 each coordinate Mg(2+). The active-site Proton acceptor is Lys-235.

The protein belongs to the mandelate racemase/muconate lactonizing enzyme family. MenC type 1 subfamily. A divalent metal cation is required as a cofactor.

The enzyme catalyses (1R,6R)-6-hydroxy-2-succinyl-cyclohexa-2,4-diene-1-carboxylate = 2-succinylbenzoate + H2O. It participates in quinol/quinone metabolism; 1,4-dihydroxy-2-naphthoate biosynthesis; 1,4-dihydroxy-2-naphthoate from chorismate: step 4/7. The protein operates within quinol/quinone metabolism; menaquinone biosynthesis. In terms of biological role, converts 2-succinyl-6-hydroxy-2,4-cyclohexadiene-1-carboxylate (SHCHC) to 2-succinylbenzoate (OSB). This Salmonella heidelberg (strain SL476) protein is o-succinylbenzoate synthase.